Reading from the N-terminus, the 613-residue chain is Leucine aminopeptidase 2 (613 aa).

A peptide is bound by residues Gln134 to Gln136 and Pro265 to Glu270. His294 provides a ligand contact to Zn(2+). Glu295 acts as the Proton acceptor in catalysis. The Zn(2+) site is built by His298 and Glu317. The Proton donor role is filled by Tyr382.

Belongs to the peptidase M1 family. It depends on Zn(2+) as a cofactor.

It is found in the cytoplasm. The protein resides in the nucleus. It catalyses the reaction an epoxide + H2O = an ethanediol. Its function is as follows. Aminopeptidase that preferentially cleaves di- and tripeptides. Also has low epoxide hydrolase activity (in vitro). Can hydrolyze the epoxide leukotriene LTA(4) but it forms preferentially 5,6-dihydroxy-7,9,11,14-eicosatetraenoic acid rather than the cytokine leukotriene B(4) as the product compared to the homologous mammalian enzyme (in vitro). In Pyricularia oryzae (strain 70-15 / ATCC MYA-4617 / FGSC 8958) (Rice blast fungus), this protein is Leucine aminopeptidase 2.